An 82-amino-acid chain; its full sequence is Small ribosomal subunit protein uS17 (82 aa).

This sequence belongs to the universal ribosomal protein uS17 family. As to quaternary structure, part of the 30S ribosomal subunit.

In terms of biological role, one of the primary rRNA binding proteins, it binds specifically to the 5'-end of 16S ribosomal RNA. This is Small ribosomal subunit protein uS17 from Rickettsia typhi (strain ATCC VR-144 / Wilmington).